The primary structure comprises 89 residues: Small ribosomal subunit protein uS15 (89 aa).

It belongs to the universal ribosomal protein uS15 family. As to quaternary structure, part of the 30S ribosomal subunit. Forms a bridge to the 50S subunit in the 70S ribosome, contacting the 23S rRNA.

One of the primary rRNA binding proteins, it binds directly to 16S rRNA where it helps nucleate assembly of the platform of the 30S subunit by binding and bridging several RNA helices of the 16S rRNA. In terms of biological role, forms an intersubunit bridge (bridge B4) with the 23S rRNA of the 50S subunit in the ribosome. This Hyphomonas neptunium (strain ATCC 15444) protein is Small ribosomal subunit protein uS15.